Here is a 154-residue protein sequence, read N- to C-terminus: MGLSDQEWQQVLTIWGKVEADLAGHGHAVLMRLFQDHPETLDRFEKFKGLKTPDQMKGSEDLKKHGVTVLTQLGKILKQKGNHEAELKPLAQTHATKHKIPVKYLEFISEVIIKVIAEKHSADFGADSQAAMKKALELFRNDMASKYKEFGFQG.

In terms of domain architecture, Globin spans 2-148; sequence GLSDQEWQQV…FRNDMASKYK (147 aa). Histidine 65 provides a ligand contact to nitrite. Histidine 65 contributes to the O2 binding site. Position 94 (histidine 94) interacts with heme b.

It belongs to the globin family. As to quaternary structure, monomeric.

The protein localises to the cytoplasm. It localises to the sarcoplasm. It carries out the reaction Fe(III)-heme b-[protein] + nitric oxide + H2O = Fe(II)-heme b-[protein] + nitrite + 2 H(+). It catalyses the reaction H2O2 + AH2 = A + 2 H2O. Functionally, monomeric heme protein which primary function is to store oxygen and facilitate its diffusion within muscle tissues. Reversibly binds oxygen through a pentacoordinated heme iron and enables its timely and efficient release as needed during periods of heightened demand. Depending on the oxidative conditions of tissues and cells, and in addition to its ability to bind oxygen, it also has a nitrite reductase activity whereby it regulates the production of bioactive nitric oxide. Under stress conditions, like hypoxia and anoxia, it also protects cells against reactive oxygen species thanks to its pseudoperoxidase activity. The chain is Myoglobin (MB) from Anas poecilorhyncha (Indian spot-billed duck).